Reading from the N-terminus, the 620-residue chain is Probable potassium transport system protein Kup (620 aa).

A run of 12 helical transmembrane segments spans residues 11–31, 51–71, 100–120, 138–158, 167–187, 202–222, 246–266, 288–308, 334–354, 364–384, 396–416, and 418–438; these read LAFLAMGIVYGDIGTSPLYAF, ILSLVFWAFVLIVSIKYLLLV, IAMLLGILATGFFFGEAVITP, LAPYVLPIAMMIIVALFAVQA, FFAPVMLLWFLVLALLGAHAI, AVHFVLLYGQHTLFILGLVVL, WFALVMPSLLLNYFGQGAYLL, LILLATFATVIASQAVISGIF, GQIYVPAANMLLFVAVIFVML, AAYGIAVTAIMMISSLLLVLV, VVTIGIVFIGMDSLLLASTST, and LMEGGWLPLLLGCVVFIVMYI.

This sequence belongs to the HAK/KUP transporter (TC 2.A.72) family.

The protein resides in the cell inner membrane. It carries out the reaction K(+)(in) + H(+)(in) = K(+)(out) + H(+)(out). In terms of biological role, transport of potassium into the cell. Likely operates as a K(+):H(+) symporter. In Vibrio cholerae serotype O1 (strain ATCC 39315 / El Tor Inaba N16961), this protein is Probable potassium transport system protein Kup.